The following is a 331-amino-acid chain: Small ribosomal subunit protein uS2 (331 aa).

This sequence belongs to the universal ribosomal protein uS2 family.

The protein is Small ribosomal subunit protein uS2 of Rhodopseudomonas palustris (strain HaA2).